Reading from the N-terminus, the 391-residue chain is Yellow-related salivary protein ASP4 (391 aa).

A signal peptide spans 1 to 18 (MKIFLCIIAVVSLQGVVA). Residue N29 is glycosylated (N-linked (GlcNAc...) asparagine).

It belongs to the major royal jelly protein family. As to expression, female salivary gland (at protein level).

It localises to the secreted. Its function is as follows. Probably modulates blood feeding of sand flies on vertebrate species by binding and sequestering different mediators involved in the host response. Binds biogenic amines. Binds serotonin and dopamine with high affinity. Binds adrenaline, octopamine and adrenaline with medium affinity. Binds histamine with low affinity. The chain is Yellow-related salivary protein ASP4 from Phlebotomus orientalis (Phlebotomine sand fly).